The primary structure comprises 295 residues: UDP-N-acetylenolpyruvoylglucosamine reductase (295 aa).

The FAD-binding PCMH-type domain occupies 23–188 (KVGGPADFLA…ISAKFALKPG (166 aa)). The active site involves arginine 167. The Proton donor role is filled by serine 217. Glutamate 287 is a catalytic residue.

The protein belongs to the MurB family. Requires FAD as cofactor.

It is found in the cytoplasm. The catalysed reaction is UDP-N-acetyl-alpha-D-muramate + NADP(+) = UDP-N-acetyl-3-O-(1-carboxyvinyl)-alpha-D-glucosamine + NADPH + H(+). It functions in the pathway cell wall biogenesis; peptidoglycan biosynthesis. Functionally, cell wall formation. This is UDP-N-acetylenolpyruvoylglucosamine reductase from Streptococcus pyogenes serotype M12 (strain MGAS9429).